Here is a 108-residue protein sequence, read N- to C-terminus: Protein RnfH (108 aa).

Positions 86–108 (ARRRRAEKAKEEGRANKVTGGRA) are disordered.

This sequence belongs to the UPF0125 (RnfH) family.

In Pseudoalteromonas atlantica (strain T6c / ATCC BAA-1087), this protein is Protein RnfH.